The following is a 729-amino-acid chain: MRIFSTFVFHRRQQIFNLRQFQTTTILRNPISIAPIQIPMDATEQSLRQSLSEKSSSVEAQGNAVRALKASRAAKPEIDAAIEQLNKLKLEKSTVEKELQSIISSSGNGSLNREAFRKAVVNTLERRLFYIPSFKIYSGVAGLFDYGPPGCAIKSNVLSFWRQHFILEENMLEVDCPCVTPEVVLKASGHVDKFTDLMVKDEKTGTCYRADHLLKDYCTEKLEKDLTISAEKAAELKDVLAVMEDFSPEQLGAKIREYGITAPDTKNPLSDPYPFNLMFQTSIGPSGLIPGYMRPETAQGIFVNFKDLYYYNGKKLPFAAAQIGQAFRNEISPRQGLLRVREFTLAEIEHFVDPENKSHPKFSDVAKLEFLMFPREEQMSGQSAKKLCLGEAVAKGTVNNETLGYFIGRVYLFLTRLGIDKERLRFRQHLANEMAHYAADCWDAEIESSYGWIECVGIADRSAYDLRAHSDKSGTPLVAEEKFAEPKEVEKLVITPVKKELGLAFKGNQKNVVESLEAMNEEEAMEMKATLESKGEVEFYVCTLKKSVNIKKNMVSISKEKKKEHQRVFTPSVIEPSFGIGRIIYCLYEHCFSTRPSKAGDEQLNLFRFPPLVAPIKCTVFPLVQNQQFEEVAKVISKELASVGISHKIDITGTSIGKRYARTDELGVPFAITVDSDTSVTIRERDSKDQVRVTLKEAASVVSSVSEGKMTWQDVWATFPHHSSAAADE.

N-acetylmethionine is present on methionine 1. Residues 1–28 (MRIFSTFVFHRRQQIFNLRQFQTTTILR) constitute a mitochondrion transit peptide. In terms of domain architecture, WHEP-TRS spans 50–106 (SLSEKSSSVEAQGNAVRALKASRAAKPEIDAAIEQLNKLKLEKSTVEKELQSIISSS). Glutamate 296 serves as a coordination point for glycine. Residues 328–330 (RNE) and 339–340 (RV) each bind ATP. Glutamate 347 is a glycine binding site. Residue 454-455 (EC) participates in ATP binding. Residue 575 to 577 (EPS) coordinates glycine. Arginine 582 provides a ligand contact to ATP.

It belongs to the class-II aminoacyl-tRNA synthetase family. As to quaternary structure, homodimer.

It is found in the mitochondrion. The protein localises to the cytoplasm. Its subcellular location is the cytosol. It carries out the reaction tRNA(Gly) + glycine + ATP = glycyl-tRNA(Gly) + AMP + diphosphate. The enzyme catalyses 2 ATP + H(+) = P(1),P(4)-bis(5'-adenosyl) tetraphosphate + diphosphate. In terms of biological role, catalyzes the ATP-dependent ligation of glycine to the 3'-end of its cognate tRNA, via the formation of an aminoacyl-adenylate intermediate (Gly-AMP). Also produces diadenosine tetraphosphate (Ap4A), a universal pleiotropic signaling molecule needed for cell regulation pathways, by direct condensation of 2 ATPs. Thereby, may play a special role in Ap4A homeostasis. The polypeptide is Glycine--tRNA ligase, mitochondrial 1 (Arabidopsis thaliana (Mouse-ear cress)).